A 415-amino-acid polypeptide reads, in one-letter code: Probable glucan 1,3-beta-glucosidase A (415 aa).

The signal sequence occupies residues 1 to 22 (MLSRLSQTALVALSLMTVLTEA). E210 acts as the Proton donor in catalysis. Intrachain disulfides connect C290–C414 and C315–C341. The Nucleophile role is filled by E307. Positions 335 to 359 (SPRYGDCGNKRQGSSSGLSEQERSD) are disordered.

This sequence belongs to the glycosyl hydrolase 5 (cellulase A) family. In terms of assembly, monomer. Mn(2+) serves as cofactor.

The protein resides in the secreted. It catalyses the reaction Successive hydrolysis of beta-D-glucose units from the non-reducing ends of (1-&gt;3)-beta-D-glucans, releasing alpha-glucose.. Beta-glucanases participate in the metabolism of beta-glucan, the main structural component of the cell wall. It could also function biosynthetically as a transglycosylase. In Aspergillus clavatus (strain ATCC 1007 / CBS 513.65 / DSM 816 / NCTC 3887 / NRRL 1 / QM 1276 / 107), this protein is Probable glucan 1,3-beta-glucosidase A (exgA).